The following is a 374-amino-acid chain: Double homeobox protein 4C (374 aa).

A compositionally biased stretch (polar residues) spans 1-10 (MALPTPSDST). 3 disordered regions span residues 1–24 (MALPTPSDSTLPAEARGRGRRRRL), 72–102 (SRQLRQHRRESRPWPGRRGPPEGRRKRTAVT), and 218–374 (LQPS…YELL). DNA-binding regions (homeobox) lie at residues 19–78 (GRRR…LRQH) and 94–153 (GRRK…PGQG). Basic and acidic residues predominate over residues 265–274 (KSREDRDPQR). 2 stretches are compositionally biased toward low complexity: residues 278–302 (PGPCAVAQPGPAQAGPQGQGVLAPP) and 319–329 (AGAAWEPQAGA). Over residues 354 to 374 (QPLQEPGRSSTVTSSLLYELL) the composition is skewed to polar residues.

As to quaternary structure, may interact with MYF5; regulates MYF5 expression. Expressed in muscles, as well as in primary myoblasts and myotubes (at protein level).

Its subcellular location is the nucleus. The protein resides in the cytoplasm. Its function is as follows. Down-regulates MYOD1 expression and may up-regulate MYF5 expression. May regulate microRNA (miRNA) transcription, up-regulating the expression of some myogenic miRNAs, including MIR1-1, MIR133A2, MIR133B and MIR206. Impairs the differentiation of myoblasts and may be involved in muscle regeneration. Reduces DUX4-induced nuclear localization of CTNNB1/beta-catenin and its subsequent activation of target genes. The sequence is that of Double homeobox protein 4C (DUX4L9) from Homo sapiens (Human).